The chain runs to 534 residues: Monolignol oxidoreductase AtBBE-like 13 (534 aa).

The first 29 residues, 1–29 (MAFVLMNNTNAFLVTLLLLSLSYIPLSFS), serve as a signal peptide directing secretion. Residues N7 and N59 are each glycosylated (N-linked (GlcNAc...) asparagine). C38 and C102 are joined by a disulfide. The 6-(S-cysteinyl)-8alpha-(pros-histidyl)-FAD (His-Cys) cross-link spans 117-181 (HDYEGLSYVS…KIHGFPAGLC (65 aa)).

It belongs to the oxygen-dependent FAD-linked oxidoreductase family. Requires FAD as cofactor. In terms of processing, the FAD cofactor is bound via a bicovalent 6-S-cysteinyl, 8alpha-N1-histidyl FAD linkage.

It is found in the secreted. Its subcellular location is the cell wall. It carries out the reaction (E)-4-coumaroyl alcohol + A = (E)-4-coumaraldehyde + AH2. The catalysed reaction is (E)-coniferol + A = (E)-coniferaldehyde + AH2. The enzyme catalyses (E)-sinapyl alcohol + A = (E)-sinapaldehyde + AH2. Its pathway is phenylpropanoid metabolism. Functionally, mediates oxidation of p-hydroxylated derivatives of cinnamyl alcohol (i.e. the monolignols p-coumaryl-, coniferyl-, and sinapyl alcohol) to their corresponding aldehydes. The electron acceptor required for these reactions is not known, but does not seem to be dioxygen. Is much less efficient towards cinnamyl alcohol. The sequence is that of Monolignol oxidoreductase AtBBE-like 13 from Arabidopsis thaliana (Mouse-ear cress).